Consider the following 597-residue polypeptide: Aspartate--tRNA ligase (597 aa).

Glu-180 contacts L-aspartate. The segment at 204–207 (QLFK) is aspartate. Arg-226 lines the L-aspartate pocket. ATP-binding positions include 226-228 (RDE) and Gln-235. His-454 lines the L-aspartate pocket. Glu-488 lines the ATP pocket. Arg-495 is an L-aspartate binding site. Residue 540–543 (GLDR) coordinates ATP.

This sequence belongs to the class-II aminoacyl-tRNA synthetase family. Type 1 subfamily. In terms of assembly, homodimer.

The protein localises to the cytoplasm. It carries out the reaction tRNA(Asp) + L-aspartate + ATP = L-aspartyl-tRNA(Asp) + AMP + diphosphate. Its function is as follows. Catalyzes the attachment of L-aspartate to tRNA(Asp) in a two-step reaction: L-aspartate is first activated by ATP to form Asp-AMP and then transferred to the acceptor end of tRNA(Asp). The chain is Aspartate--tRNA ligase from Clostridium perfringens (strain ATCC 13124 / DSM 756 / JCM 1290 / NCIMB 6125 / NCTC 8237 / Type A).